The primary structure comprises 208 residues: Outer-membrane lipoprotein LolB (208 aa).

The first 21 residues, methionine 1–alanine 21, serve as a signal peptide directing secretion. Residue cysteine 22 is the site of N-palmitoyl cysteine attachment. Cysteine 22 is lipidated: S-diacylglycerol cysteine.

The protein belongs to the LolB family. As to quaternary structure, monomer.

Its subcellular location is the cell outer membrane. In terms of biological role, plays a critical role in the incorporation of lipoproteins in the outer membrane after they are released by the LolA protein. The chain is Outer-membrane lipoprotein LolB from Erwinia tasmaniensis (strain DSM 17950 / CFBP 7177 / CIP 109463 / NCPPB 4357 / Et1/99).